The primary structure comprises 583 residues: Pyruvate kinase isozyme A, chloroplastic (583 aa).

A chloroplast-targeting transit peptide spans 1–74 (MSQSLHFSPN…NSGVLYNNNN (74 aa)). Residues 43-52 (KASTSPSSSS) are compositionally biased toward low complexity. A disordered region spans residues 43–75 (KASTSPSSSSDPQVLVADNGTGNSGVLYNNNNK). Polar residues predominate over residues 62–75 (GTGNSGVLYNNNNK). Residue arginine 134 participates in substrate binding. K(+) contacts are provided by asparagine 136, aspartate 168, and threonine 169. 136 to 139 (NMCH) is a binding site for ATP. Glutamate 333 is a Mg(2+) binding site. Substrate-binding residues include glycine 356, aspartate 357, and serine 389. Aspartate 357 contributes to the Mg(2+) binding site.

This sequence belongs to the pyruvate kinase family. In terms of assembly, oligomer of alpha and beta subunits. Requires Mg(2+) as cofactor. It depends on K(+) as a cofactor.

It localises to the plastid. It is found in the chloroplast. It catalyses the reaction pyruvate + ATP = phosphoenolpyruvate + ADP + H(+). It participates in carbohydrate degradation; glycolysis; pyruvate from D-glyceraldehyde 3-phosphate: step 5/5. This chain is Pyruvate kinase isozyme A, chloroplastic, found in Ricinus communis (Castor bean).